Here is a 574-residue protein sequence, read N- to C-terminus: Isocitrate dehydrogenase kinase/phosphatase (574 aa).

ATP contacts are provided by residues 315–321 (APGIRGM) and lysine 336. The active site involves aspartate 371.

The protein belongs to the AceK family.

The protein resides in the cytoplasm. It carries out the reaction L-seryl-[isocitrate dehydrogenase] + ATP = O-phospho-L-seryl-[isocitrate dehydrogenase] + ADP + H(+). Functionally, bifunctional enzyme which can phosphorylate or dephosphorylate isocitrate dehydrogenase (IDH) on a specific serine residue. This is a regulatory mechanism which enables bacteria to bypass the Krebs cycle via the glyoxylate shunt in response to the source of carbon. When bacteria are grown on glucose, IDH is fully active and unphosphorylated, but when grown on acetate or ethanol, the activity of IDH declines drastically concomitant with its phosphorylation. In Escherichia coli (strain SMS-3-5 / SECEC), this protein is Isocitrate dehydrogenase kinase/phosphatase.